Consider the following 105-residue polypeptide: Cuticle protein AMP1A (105 aa).

The tract at residues 1–21 (DRDAQTLTDERSDQGDGNFRY) is disordered. The Chitin-binding type R&amp;R domain maps to 16-81 (DGNFRYEFET…PSSDLLPVGP (66 aa)).

As to expression, arthrodial membrane.

The protein is Cuticle protein AMP1A of Homarus americanus (American lobster).